The following is a 142-amino-acid chain: Neuritin (142 aa).

The first 27 residues, 1–27, serve as a signal peptide directing secretion; it reads MGLKLNGRYISLILAVQIAYLVQAVRA. Residue glycine 116 is the site of GPI-anchor amidated glycine attachment. Residues 117 to 142 constitute a propeptide, removed in mature form; it reads AAGSLLPAFPVLLVSLSAALATWLSF.

The protein belongs to the neuritin family. As to quaternary structure, component of the outer core of AMPAR complex. AMPAR complex consists of an inner core made of 4 pore-forming GluA/GRIA proteins (GRIA1, GRIA2, GRIA3 and GRIA4) and 4 major auxiliary subunits arranged in a twofold symmetry. One of the two pairs of distinct binding sites is occupied either by CNIH2, CNIH3 or CACNG2, CACNG3. The other harbors CACNG2, CACNG3, CACNG4, CACNG8 or GSG1L. This inner core of AMPAR complex is complemented by outer core constituents binding directly to the GluA/GRIA proteins at sites distinct from the interaction sites of the inner core constituents. Outer core constituents include at least PRRT1, PRRT2, CKAMP44/SHISA9, FRRS1L and NRN1. The proteins of the inner and outer core serve as a platform for other, more peripherally associated AMPAR constituents. Alone or in combination, these auxiliary subunits control the gating and pharmacology of the AMPAR complex and profoundly impact their biogenesis and protein processing.

Its subcellular location is the cell membrane. The protein resides in the synapse. Promotes neurite outgrowth and especially branching of neuritic processes in primary hippocampal and cortical cells. The protein is Neuritin (NRN1) of Homo sapiens (Human).